A 179-amino-acid polypeptide reads, in one-letter code: Cytochrome b6-f complex iron-sulfur subunit 1 (179 aa).

Residues 21–43 (LLTFGTVTGVALGALYPVVNYFI) traverse the membrane as a helical segment. Positions 61-162 (GNDVSVSKFL…AKTENDKIVL (102 aa)) constitute a Rieske domain. [2Fe-2S] cluster contacts are provided by C108, H110, C126, and H129. A disulfide bond links C113 and C128.

Belongs to the Rieske iron-sulfur protein family. The 4 large subunits of the cytochrome b6-f complex are cytochrome b6, subunit IV (17 kDa polypeptide, PetD), cytochrome f and the Rieske protein, while the 4 small subunits are PetG, PetL, PetM and PetN. The complex functions as a dimer. [2Fe-2S] cluster is required as a cofactor.

Its subcellular location is the cellular thylakoid membrane. It carries out the reaction 2 oxidized [plastocyanin] + a plastoquinol + 2 H(+)(in) = 2 reduced [plastocyanin] + a plastoquinone + 4 H(+)(out). Component of the cytochrome b6-f complex, which mediates electron transfer between photosystem II (PSII) and photosystem I (PSI), cyclic electron flow around PSI, and state transitions. This is Cytochrome b6-f complex iron-sulfur subunit 1 from Trichormus variabilis (strain ATCC 29413 / PCC 7937) (Anabaena variabilis).